Reading from the N-terminus, the 488-residue chain is Ribulose bisphosphate carboxylase large chain (488 aa).

Substrate-binding residues include asparagine 127 and threonine 177. The active-site Proton acceptor is the lysine 179. A substrate-binding site is contributed by lysine 181. Residues lysine 205, aspartate 207, and glutamate 208 each contribute to the Mg(2+) site. Lysine 205 carries the N6-carboxylysine modification. The active-site Proton acceptor is the histidine 297. Residues arginine 298, histidine 330, and serine 382 each coordinate substrate.

Belongs to the RuBisCO large chain family. Type I subfamily. In terms of assembly, heterohexadecamer of 8 large chains and 8 small chains. Mg(2+) is required as a cofactor.

It localises to the plastid. The protein resides in the chloroplast. It catalyses the reaction 2 (2R)-3-phosphoglycerate + 2 H(+) = D-ribulose 1,5-bisphosphate + CO2 + H2O. The catalysed reaction is D-ribulose 1,5-bisphosphate + O2 = 2-phosphoglycolate + (2R)-3-phosphoglycerate + 2 H(+). Its function is as follows. RuBisCO catalyzes two reactions: the carboxylation of D-ribulose 1,5-bisphosphate, the primary event in carbon dioxide fixation, as well as the oxidative fragmentation of the pentose substrate in the photorespiration process. Both reactions occur simultaneously and in competition at the same active site. This Pyropia yezoensis (Susabi-nori) protein is Ribulose bisphosphate carboxylase large chain.